The following is a 182-amino-acid chain: Ribosome maturation factor RimM (182 aa).

The 81-residue stretch at 102–182 (EEGDYYWKDL…SIEVDWDPGF (81 aa)) folds into the PRC barrel domain.

Belongs to the RimM family. In terms of assembly, binds ribosomal protein uS19.

It localises to the cytoplasm. Its function is as follows. An accessory protein needed during the final step in the assembly of 30S ribosomal subunit, possibly for assembly of the head region. Essential for efficient processing of 16S rRNA. May be needed both before and after RbfA during the maturation of 16S rRNA. It has affinity for free ribosomal 30S subunits but not for 70S ribosomes. The polypeptide is Ribosome maturation factor RimM (Escherichia fergusonii (strain ATCC 35469 / DSM 13698 / CCUG 18766 / IAM 14443 / JCM 21226 / LMG 7866 / NBRC 102419 / NCTC 12128 / CDC 0568-73)).